The following is a 733-amino-acid chain: Histone-lysine N-methyltransferase, H3 lysine-36 specific (733 aa).

The tract at residues 1 to 32 is disordered; it reads MSKNQSVSASEDEKEILNNNAEGHKPQRLFDQ. At S10 the chain carries Phosphoserine. Residues 22 to 31 are compositionally biased toward basic and acidic residues; that stretch reads EGHKPQRLFD. In terms of domain architecture, AWS spans 63–118; it reads NDFMECDCYEEFSDGVNHACDEDSDCINRLTLIECVNDLCSSCGNDCQNQRFQKKQ. The region spanning 120–237 is the SET domain; sequence APIAIFKTKH…KGEEITFDYN (118 aa). The region spanning 244–260 is the Post-SET domain; that stretch reads QAQKCYCEEPNCIGFLG. Residues 475 to 507 enclose the WW domain; it reads VRLPPGWEIIHENGRPLYYNAEQKTKLHYPPSG. Disordered stretches follow at residues 504–548 and 672–692; these read PPSG…EEYE and KELK…GKRH. The segment covering 506–528 has biased composition (polar residues); the sequence is SGSSKVFSSRSNTQVNSPSSSGI. The residue at position 522 (S522) is a Phosphoserine. A coiled-coil region spans residues 548–630; it reads ERKKQKRLEY…TVSQSQRLEH (83 aa). The segment at 619 to 718 is binding to RNA polymerase II CTD; it reads RKTVSQSQRL…KKQKKALALS (100 aa). A compositionally biased stretch (basic and acidic residues) spans 672–688; sequence KELKKDSSRAPPDDLTK.

It belongs to the class V-like SAM-binding methyltransferase superfamily. Histone-lysine methyltransferase family. SET2 subfamily. In terms of assembly, interacts with the RNA polymerase II hyperphosphorylated CTD. Interacts with CYC8.

It is found in the nucleus. The protein resides in the chromosome. The catalysed reaction is L-lysyl(36)-[histone H3] + 3 S-adenosyl-L-methionine = N(6),N(6),N(6)-trimethyl-L-lysyl(36)-[histone H3] + 3 S-adenosyl-L-homocysteine + 3 H(+). Histone methyltransferase that trimethylates histone H3 'Lys-36' forming H3K36me3. Involved in transcription elongation as well as in transcription repression. The methyltransferase activity requires the recruitment to the RNA polymerase II, which is CTK1 dependent. In Saccharomyces cerevisiae (strain ATCC 204508 / S288c) (Baker's yeast), this protein is Histone-lysine N-methyltransferase, H3 lysine-36 specific (SET2).